The chain runs to 548 residues: MTELTISSADISGAIEQYVATFSADPTREEIGIVSDAGDGIAHVEGLPSVMTQELLEFPGGVLGVALNLDERSVGTVVLGDFQDIEEGQQVKRTGEVLSVPVGDAFLGRVINPLGQPIDGRGDIEAETRRALELQAPSVVQRQSVSEPLQTGIKAIDSQTPIGRGQRQLIIGDRKTGKTAVCIDTILNQKQAWETGDPAQQVRCIYVAVGQKGSTVAAVRRTLDEAGALEYTTIVAAPASDAAGFKWLAPYTGSALGQHWMYQGKHVLIVFDDLTKQAEAYRAISLLLRRPPGREAYPGDVFYLHSRLLERCAKLSDELGAGSLTGLPIIETKANDISAYIPTNVISITDGQCFLQTDLFNQGVRPAVNVGVSVSRVGGAAQIKAMKEVAGSLRLELSQYRELEAFAAFASDLDATSKAQLERGARLVELLKQPQNSPYPVEEQVVAIYLGTGGHLDSVPVEDVMRFEQEFLDHVRGSHADILADIRETKKFSEDTETKLTNAVNAFKKSFAATDGSSVEVKGVAAEALDESAVGQETVQVRKPAPKK.

Position 172 to 179 (172 to 179 (GDRKTGKT)) interacts with ATP.

This sequence belongs to the ATPase alpha/beta chains family. In terms of assembly, F-type ATPases have 2 components, CF(1) - the catalytic core - and CF(0) - the membrane proton channel. CF(1) has five subunits: alpha(3), beta(3), gamma(1), delta(1), epsilon(1). CF(0) has three main subunits: a(1), b(2) and c(9-12). The alpha and beta chains form an alternating ring which encloses part of the gamma chain. CF(1) is attached to CF(0) by a central stalk formed by the gamma and epsilon chains, while a peripheral stalk is formed by the delta and b chains.

Its subcellular location is the cell membrane. It catalyses the reaction ATP + H2O + 4 H(+)(in) = ADP + phosphate + 5 H(+)(out). Functionally, produces ATP from ADP in the presence of a proton gradient across the membrane. The alpha chain is a regulatory subunit. This Mycobacteroides abscessus (strain ATCC 19977 / DSM 44196 / CCUG 20993 / CIP 104536 / JCM 13569 / NCTC 13031 / TMC 1543 / L948) (Mycobacterium abscessus) protein is ATP synthase subunit alpha.